The sequence spans 399 residues: Acetylornithine aminotransferase (399 aa).

Residues 97–98 and phenylalanine 130 contribute to the pyridoxal 5'-phosphate site; that span reads GA. Residue arginine 133 participates in N(2)-acetyl-L-ornithine binding. Residue 215 to 218 participates in pyridoxal 5'-phosphate binding; it reads DEVQ. Lysine 244 is modified (N6-(pyridoxal phosphate)lysine). Threonine 272 provides a ligand contact to N(2)-acetyl-L-ornithine. Threonine 273 is a binding site for pyridoxal 5'-phosphate.

The protein belongs to the class-III pyridoxal-phosphate-dependent aminotransferase family. ArgD subfamily. As to quaternary structure, homodimer. It depends on pyridoxal 5'-phosphate as a cofactor.

The protein resides in the cytoplasm. It carries out the reaction N(2)-acetyl-L-ornithine + 2-oxoglutarate = N-acetyl-L-glutamate 5-semialdehyde + L-glutamate. It participates in amino-acid biosynthesis; L-arginine biosynthesis; N(2)-acetyl-L-ornithine from L-glutamate: step 4/4. In Mesorhizobium japonicum (strain LMG 29417 / CECT 9101 / MAFF 303099) (Mesorhizobium loti (strain MAFF 303099)), this protein is Acetylornithine aminotransferase.